The chain runs to 77 residues: Small ribosomal subunit protein uS17 (77 aa).

Belongs to the universal ribosomal protein uS17 family. Part of the 30S ribosomal subunit.

Functionally, one of the primary rRNA binding proteins, it binds specifically to the 5'-end of 16S ribosomal RNA. The polypeptide is Small ribosomal subunit protein uS17 (Rickettsia rickettsii (strain Sheila Smith)).